Here is a 98-residue protein sequence, read N- to C-terminus: Large ribosomal subunit protein uL23 (98 aa).

Belongs to the universal ribosomal protein uL23 family. In terms of assembly, part of the 50S ribosomal subunit. Contacts protein L29, and trigger factor when it is bound to the ribosome.

Functionally, one of the early assembly proteins it binds 23S rRNA. One of the proteins that surrounds the polypeptide exit tunnel on the outside of the ribosome. Forms the main docking site for trigger factor binding to the ribosome. The polypeptide is Large ribosomal subunit protein uL23 (Teredinibacter turnerae (strain ATCC 39867 / T7901)).